The following is a 1028-amino-acid chain: Endosome/lysosome-associated apoptosis and autophagy regulator family member 2 (1028 aa).

Positions 1–47 (MLLLTLRRAKGRDRGRPAGGPRRALSLPWSPAWICCWALAGCQAVWA) are cleaved as a signal peptide. The Extracellular portion of the chain corresponds to 48–928 (GDSSSSGRPL…TCETVDFWLK (881 aa)). Asparagine 168 carries an N-linked (GlcNAc...) asparagine glycan. 3 disulfides stabilise this stretch: cysteine 292/cysteine 309, cysteine 322/cysteine 345, and cysteine 325/cysteine 357. 2 N-linked (GlcNAc...) asparagine glycosylation sites follow: asparagine 404 and asparagine 690. The MRH domain maps to 671 to 876 (SDCFFYHEKE…LWESAEACPL (206 aa)). Cystine bridges form between cysteine 673–cysteine 719, cysteine 729–cysteine 757, cysteine 826–cysteine 862, and cysteine 838–cysteine 874. The chain crosses the membrane as a helical span at residues 929–949 (VGAGVGAFTAVLLVALTCYFW). Over 950-1028 (KKNQKLEYKY…QLKSSRCPNI (79 aa)) the chain is Cytoplasmic. At serine 1017 the chain carries Phosphoserine.

The protein belongs to the ELAPOR family.

Its subcellular location is the cell membrane. Functions as a regulator of the BMP signaling pathway and may be involved in epidermal differentiation. In Mus musculus (Mouse), this protein is Endosome/lysosome-associated apoptosis and autophagy regulator family member 2.